Consider the following 656-residue polypeptide: uncharacterized protein (656 aa).

Disordered stretches follow at residues 1–41 (MMAT…ESEG) and 60–88 (SNKVEKDSDSEQRGRKKETTGPNNYHNLE). Low complexity predominate over residues 22-36 (SDSSDSGSDVSFFSV). S39 is subject to Phosphoserine. A compositionally biased stretch (basic and acidic residues) spans 62–78 (KVEKDSDSEQRGRKKET).

The protein localises to the cytoplasm. The protein resides in the mitochondrion. This is an uncharacterized protein from Saccharomyces cerevisiae (strain ATCC 204508 / S288c) (Baker's yeast).